The following is a 291-amino-acid chain: Lipoyl synthase (291 aa).

Cys-35, Cys-40, Cys-46, Cys-61, Cys-65, Cys-68, and Ser-273 together coordinate [4Fe-4S] cluster. Positions 47–262 (FGKRQATFLI…KEKALAMGFE (216 aa)) constitute a Radical SAM core domain.

It belongs to the radical SAM superfamily. Lipoyl synthase family. [4Fe-4S] cluster is required as a cofactor.

The protein resides in the cytoplasm. The catalysed reaction is [[Fe-S] cluster scaffold protein carrying a second [4Fe-4S](2+) cluster] + N(6)-octanoyl-L-lysyl-[protein] + 2 oxidized [2Fe-2S]-[ferredoxin] + 2 S-adenosyl-L-methionine + 4 H(+) = [[Fe-S] cluster scaffold protein] + N(6)-[(R)-dihydrolipoyl]-L-lysyl-[protein] + 4 Fe(3+) + 2 hydrogen sulfide + 2 5'-deoxyadenosine + 2 L-methionine + 2 reduced [2Fe-2S]-[ferredoxin]. The protein operates within protein modification; protein lipoylation via endogenous pathway; protein N(6)-(lipoyl)lysine from octanoyl-[acyl-carrier-protein]: step 2/2. Functionally, catalyzes the radical-mediated insertion of two sulfur atoms into the C-6 and C-8 positions of the octanoyl moiety bound to the lipoyl domains of lipoate-dependent enzymes, thereby converting the octanoylated domains into lipoylated derivatives. In Geobacter sp. (strain M21), this protein is Lipoyl synthase.